A 329-amino-acid polypeptide reads, in one-letter code: Ribosomal RNA small subunit methyltransferase C (329 aa).

It belongs to the methyltransferase superfamily. RsmC family. Monomer.

It localises to the cytoplasm. It catalyses the reaction guanosine(1207) in 16S rRNA + S-adenosyl-L-methionine = N(2)-methylguanosine(1207) in 16S rRNA + S-adenosyl-L-homocysteine + H(+). In terms of biological role, specifically methylates the guanine in position 1207 of 16S rRNA in the 30S particle. This Actinobacillus pleuropneumoniae serotype 3 (strain JL03) protein is Ribosomal RNA small subunit methyltransferase C.